The following is a 131-amino-acid chain: Transcriptional activator protein (131 aa).

The Nuclear localization signal motif lies at 13-28; the sequence is KAQHRIAKKRAVRRRR. A zinc finger spans residues 33-52; the sequence is CGCSIYIHINCAKDGNGFTH. The interval 78–131 is disordered; sequence DVQXGGSTLHAHKDIPHTNPVQPQPEESTKSSQSVPELPSLDGIDSSFWDDIFE. The segment at 117–131 is transactivation; it reads SLDGIDSSFWDDIFE.

This sequence belongs to the geminiviridae transcriptional activator protein family. As to quaternary structure, monomer. Homodimer. Homooligomer. Self-interaction correlates with nuclear localization and efficient activation of transcription. Monomers suppress local silencing by interacting with and inactivating host adenosine kinase 2 (ADK2) in the cytoplasm. Interacts with and inhibits host SNF1 kinase. Binds to ssDNA. Phosphorylated.

The protein localises to the host nucleus. The protein resides in the host cytoplasm. Functionally, strong activator of the late viral genes promoters. Enhances the expression of the capsid protein and nuclear shuttle protein. Acts as a suppressor of RNA-mediated gene silencing, also known as post-transcriptional gene silencing (PTGS), a mechanism of plant viral defense that limits the accumulation of viral RNAs. Suppresses the host RNA silencing by inhibiting adenosine kinase 2 (ADK2), a kinase involved in a general methylation pathway. Also suppresses the host basal defense by interacting with and inhibiting SNF1 kinase, a key regulator of cell metabolism implicated in innate antiviral defense. Determines pathogenicity. The polypeptide is Transcriptional activator protein (Cucurbita moschata (Winter crookneck squash)).